The chain runs to 65 residues: Large ribosomal subunit protein uL29 (65 aa).

Belongs to the universal ribosomal protein uL29 family.

This Buchnera aphidicola subsp. Acyrthosiphon pisum (strain 5A) protein is Large ribosomal subunit protein uL29.